We begin with the raw amino-acid sequence, 553 residues long: Flotillin family inner membrane protein YqiK (553 aa).

The Periplasmic segment spans residues 1–9 (MDDIVNSVP). A helical membrane pass occupies residues 10-30 (SWMFTAIIAVCILFIIGIIFA). Residues 31 to 553 (RLYRRASAEQ…STTPVEEKAE (523 aa)) are Cytoplasmic-facing.

The protein belongs to the band 7/mec-2 family. Flotillin subfamily. In terms of assembly, homooligomerizes.

The protein resides in the cell inner membrane. It localises to the membrane raft. Found in membrane microdomains that may be equivalent to eukaryotic membrane rafts. FMMs are highly dynamic and increase in number as cells age. Flotillins are thought to be important factors in membrane fluidity. This chain is Flotillin family inner membrane protein YqiK (yqiK), found in Escherichia coli (strain K12).